Reading from the N-terminus, the 863-residue chain is uncharacterized protein (863 aa).

Residues 1-29 (MHQSGSVSLCRSAISVLVATALYSPIALA) form the signal peptide. One can recognise an Autotransporter domain in the interval 595 to 863 (GVSYDTAMWS…NTQAGVVWTF (269 aa)).

The protein localises to the cell outer membrane. This is an uncharacterized protein from Escherichia coli (strain K12).